The primary structure comprises 334 residues: MEGRHKEYRIRFSPGWVEVVQDDVTIPGRRALITGATGLLGRAVYKEFKENSWHVLGCGYSRARPRFEYLNLLDAAAVKALIQDFKPHVIIHCAAERRPDIVESQPEFASLLNVVASENLAKEAAGVGAFLIYVSSDYVFDGTSPPYREDSVPNPLNLYGKTKLEGERAVLHNNEGAAVLRVPVLYGDVEKLSESAVTILFDKVQFSNKSANMDHWQQRFPTYVKDVASVCLQLTERRLQDPSIKGIYHWSGNEQMTKYEMTCAMADAFNLPSSHLRPITDEPVGATPRPWNPQLDCSKLEKIGIGQRTPFRVGIRESLWPFLVDKRWRQTVFH.

NADP(+) contacts are provided by residues 37–40, 60–62, 71–72, cysteine 93, arginine 97, tyrosine 159, and leucine 185; these read TGLL, YSR, and NL. Positions 319 to 334 are required for interaction with MAT2A; it reads LWPFLVDKRWRQTVFH.

Belongs to the dTDP-4-dehydrorhamnose reductase family. MAT2B subfamily. As to quaternary structure, heterotrimer; composed of a catalytic mat2a homodimer that binds one regulatory mat2b chain. Heterohexamer; composed of a central, catalytic mat2a homotetramer flanked on either side by a regulatory mat2b chain. NADP binding increases the affinity for mat2a.

The protein operates within amino-acid biosynthesis; S-adenosyl-L-methionine biosynthesis; S-adenosyl-L-methionine from L-methionine: step 1/1. Functionally, regulatory subunit of S-adenosylmethionine synthetase 2, an enzyme that catalyzes the formation of S-adenosylmethionine from methionine and ATP. Regulates MAT2A catalytic activity by changing its kinetic properties, increasing its affinity for L-methionine. Can bind NADP (in vitro). In Xenopus tropicalis (Western clawed frog), this protein is Methionine adenosyltransferase 2 subunit beta (mat2b).